The primary structure comprises 141 residues: uncharacterized protein (141 aa).

Transmembrane regions (helical) follow at residues Phe7–Val27, Phe34–Thr54, Leu69–Leu89, Val97–Gly117, and Asn121–Phe141. Positions Ala14–Val140 constitute an EamA domain.

It belongs to the EamA transporter family.

Its subcellular location is the cell membrane. This is an uncharacterized protein from Sinorhizobium sp.